Consider the following 117-residue polypeptide: Ribosome-binding factor A (117 aa).

Belongs to the RbfA family. In terms of assembly, monomer. Binds 30S ribosomal subunits, but not 50S ribosomal subunits or 70S ribosomes.

Its subcellular location is the cytoplasm. Its function is as follows. One of several proteins that assist in the late maturation steps of the functional core of the 30S ribosomal subunit. Associates with free 30S ribosomal subunits (but not with 30S subunits that are part of 70S ribosomes or polysomes). Required for efficient processing of 16S rRNA. May interact with the 5'-terminal helix region of 16S rRNA. The sequence is that of Ribosome-binding factor A from Blochmanniella floridana.